The following is a 352-amino-acid chain: Membrane progestin receptor alpha (352 aa).

At 1-75 (MATVVMEQIG…FLTLFQRHNE (75 aa)) the chain is on the cytoplasmic side. Residues 76–96 (TLNVWTHLLAAFIILVKWQEI) traverse the membrane as a helical segment. Topologically, residues 97–110 (SETVDFLRDPHAQP) are extracellular. A helical transmembrane segment spans residues 111–131 (LFIVLLAAFTYLSFSALAHLL). The Cytoplasmic portion of the chain corresponds to 132 to 139 (SAKSELSY). The chain crosses the membrane as a helical span at residues 140 to 160 (YTFYFLDYVGVAVYQYGSALA). Residues 161–175 (HYYYAIEKEWHTKVQ) lie on the Extracellular side of the membrane. The helical transmembrane segment at 176–196 (GLFLPAAAFLAWLTCFGCCYG) threads the bilayer. The Cytoplasmic portion of the chain corresponds to 197 to 242 (KYASPELPKVANKLFQVVPSALAYCLDISPVVHRIYSCYQEGCSDP). A helical membrane pass occupies residues 243–263 (VVAYHFYHVVFFLIGAYFFCC). Topologically, residues 264–275 (PHPESLFPGKCD) are extracellular. The helical transmembrane segment at 276–296 (FIGQGHQLFHVFVVVCTLTQV) threads the bilayer. Over 297–316 (EALRTDFTERRPFYERLHGD) the chain is Cytoplasmic. A helical membrane pass occupies residues 317–337 (LAHDAVALFIFTACCSALTAF). The Extracellular segment spans residues 338 to 352 (YVRQRVRASLHEKGE).

The protein belongs to the ADIPOR family. In terms of tissue distribution, strongly expressed in ovary and brain; lower expression in testis and pituitary. Not detected in heart, kidney, spleen, intestine, gill and muscle.

The protein localises to the cell membrane. Functionally, steroid membrane receptor. Binds progesterone, progestin and 17-hydroxyprogesterone in vitro. Capable of mediating progestin-induced oocyte maturation. The sequence is that of Membrane progestin receptor alpha (mpra) from Cynoscion nebulosus (Spotted seatrout).